Here is a 151-residue protein sequence, read N- to C-terminus: MFGGAHELSIDSKGRLAVPAKFRDILSRLYTPAVVVTLESKHKLLMYPVAEWEKVAAQLLNLKVADNPVLRRFQNLLLHNAEILEWDSAGRVLLPAGLRKRVDFDREVVLVGRANRLELWGREQWEAEMVQALDDDPDELAFQLGQTDLQL.

2 SpoVT-AbrB domains span residues 5-51 (AHEL…PVAE) and 81-124 (AEIL…GREQ).

This sequence belongs to the MraZ family. As to quaternary structure, forms oligomers.

The protein resides in the cytoplasm. It localises to the nucleoid. The polypeptide is Transcriptional regulator MraZ (Neisseria meningitidis serogroup C / serotype 2a (strain ATCC 700532 / DSM 15464 / FAM18)).